Consider the following 260-residue polypeptide: Vesicle-associated membrane protein 7B (260 aa).

At 1–189 (MPIIYSLVAR…KCAMWWKNVK (189 aa)) the chain is on the cytoplasmic side. In terms of domain architecture, Longin spans 7-110 (LVARGSSVLA…GMNSDFSRTL (104 aa)). The 62-residue stretch at 125 to 186 (TMSRTMAEID…KQLKCAMWWK (62 aa)) folds into the v-SNARE coiled-coil homology domain. A helical; Anchor for type IV membrane protein transmembrane segment spans residues 190-210 (LMLVLGAIVLIIIFIIVMSYC). The Vesicular segment spans residues 211–260 (DGFRSGSKCRSSPSSNSTPTPTPTETPTPTPTPTSTPTPSQLLETLLNQF). Residues 215 to 250 (SGSKCRSSPSSNSTPTPTPTETPTPTPTPTSTPTPS) form a disordered region. The segment covering 230 to 246 (TPTPTETPTPTPTPTST) has biased composition (pro residues).

This sequence belongs to the synaptobrevin family.

It localises to the cytoplasmic vesicle. It is found in the secretory vesicle membrane. Its subcellular location is the golgi apparatus. The protein localises to the trans-Golgi network membrane. The protein resides in the late endosome membrane. It localises to the lysosome membrane. It is found in the endoplasmic reticulum membrane. Its subcellular location is the phagosome membrane. Involved in the targeting and/or fusion of transport vesicles to their target membrane during transport of proteins from the early endosome to the lysosome. Required for heterotypic fusion of late endosomes with lysosomes and homotypic lysosomal fusion. The chain is Vesicle-associated membrane protein 7B from Dictyostelium discoideum (Social amoeba).